We begin with the raw amino-acid sequence, 224 residues long: 7-cyano-7-deazaguanine synthase (224 aa).

Leucine 12–threonine 22 provides a ligand contact to ATP. Residues cysteine 193, cysteine 201, cysteine 204, and cysteine 207 each contribute to the Zn(2+) site.

This sequence belongs to the QueC family. Zn(2+) serves as cofactor.

The enzyme catalyses 7-carboxy-7-deazaguanine + NH4(+) + ATP = 7-cyano-7-deazaguanine + ADP + phosphate + H2O + H(+). It functions in the pathway purine metabolism; 7-cyano-7-deazaguanine biosynthesis. Functionally, catalyzes the ATP-dependent conversion of 7-carboxy-7-deazaguanine (CDG) to 7-cyano-7-deazaguanine (preQ(0)). In Prochlorococcus marinus (strain AS9601), this protein is 7-cyano-7-deazaguanine synthase.